Reading from the N-terminus, the 564-residue chain is MFSRNHRSRITVARGSALEMEFKRGRFRLSFFSESPEDTELQRKLDHEIRMRDGACKLLAACSQREQALEATKSLLVCNSRILSYMGELQRRKEAQVLEKTGRRPSDSVQPAQHSPCRGRVCISDLRIPLMWKDTEYFKNKGDLHRWAVFLLLQIGEQIQDTEMVLVDRTLTDISFQNNVLFAEAEPDFELRLELYGACVEEEGALAGAPKRLATKLSSSLGRSSGKRVRASLDSAGASGNSPVLLPTPAVGGPRFHLLAHTTLTLEEVQDGFRTHDLTLTSHEENPAWLPLYGSVCCRLAAQPLCMIQPTASGALRVQQAGELQNGTLVHGVLKGTNLFCYWRSEDADTGQEPLFTIVINKETRVRAGELEQAPEWPFTLSISNKYGDDEVTNTLQLESREALQNWMEALWQLFFDMSQWRHCCDEVMKIETPAPRKPPQALAKQGSLYHEMAIEPLDDIAAVTDILAQREGTRLEPSPPWLAMFTDQPALPSSCSPASVAPVPTWMQPLPWGRPRTFSLDAAPADHSLGPSRSVAPLPPQRSPKSRGFYSKSQLGPWLQSPV.

Residue arginine 14 is modified to Omega-N-methylarginine. One can recognise an REM-1 domain in the interval 17-98; the sequence is ALEMEFKRGR…LQRRKEAQVL (82 aa). Phosphoserine is present on residues serine 30 and serine 106. Arginine 230 is subject to Asymmetric dimethylarginine. Position 232 is a phosphoserine (serine 232). A PH domain is found at 309-416; the sequence is QPTASGALRV…WMEALWQLFF (108 aa). Residues 518 to 564 are disordered; that stretch reads TFSLDAAPADHSLGPSRSVAPLPPQRSPKSRGFYSKSQLGPWLQSPV. Phosphoserine occurs at positions 520, 529, and 544.

In terms of assembly, interacts via its C-terminal region with the TAX1BP3 PDZ domain. This interaction facilitates Rho-mediated activation of the c-Fos serum response element (SRE). Interacts with SEPT9. Specifically binds to GTP-bound RHOA, RHOB and RHOC and inhibits their GTPase activity. As to expression, abundantly expressed in brain and kidney. Weakly expressed in lung, testis, skeletal muscle, heart and thymus.

Functionally, mediates Rho signaling to activate NF-kappa-B and may confer increased resistance to apoptosis to cells in gastric tumorigenesis. May play a novel role in the organization of septin structures. The chain is Rhotekin from Mus musculus (Mouse).